Consider the following 952-residue polypeptide: Plasma membrane ATPase 4 (952 aa).

Residues 1 to 64 (MAKAISLEEI…EKNESKILKF (64 aa)) are Cytoplasmic-facing. Residues 65–84 (LGFMWNPLSWVMEAAAVMAI) form a helical membrane-spanning segment. At 85 to 96 (ALANGDGKPPDW) the chain is on the extracellular side. Residues 97 to 117 (QDFIGIICLLVINSTISFIEE) traverse the membrane as a helical segment. Topologically, residues 118-246 (NNAGNAAAAL…GHFQKVLTAI (129 aa)) are cytoplasmic. A helical membrane pass occupies residues 247–267 (GNFCICSIAIGMLVEIIVMYP). Residues 268 to 277 (IQHRKYRDGI) lie on the Extracellular side of the membrane. A helical membrane pass occupies residues 278–299 (DNLLVLLIGGIPIAMPTVLSVT). Topologically, residues 300 to 646 (MAIGSHRLSQ…TSRAIFQRMK (347 aa)) are cytoplasmic. D332 serves as the catalytic 4-aspartylphosphate intermediate. D591 and D595 together coordinate Mg(2+). Residues 647–668 (NYTIYAVSITIRIVFGFMFIAL) form a helical membrane-spanning segment. The Extracellular portion of the chain corresponds to 669 to 673 (IWKYD). Residues 674-696 (FSAFMVLIIAILNDGTIMTISKD) traverse the membrane as a helical segment. Over 697–712 (RVKPSPMPDSWKLKEI) the chain is Cytoplasmic. The chain crosses the membrane as a helical span at residues 713-733 (FATGVVLGGYQALMTVVFFWA). The Extracellular segment spans residues 734 to 754 (MHDTDFFSDKFGVKSLRNSDE). Residues 755 to 775 (EMMSALYLQVSIISQALIFVT) traverse the membrane as a helical segment. The Cytoplasmic portion of the chain corresponds to 776–787 (RSRSWSFLERPG). Residues 788-808 (MLLVIAFMIAQLVATLIAVYA) traverse the membrane as a helical segment. Residues 809–817 (NWAFARVKG) lie on the Extracellular side of the membrane. Residues 818 to 838 (CGWGWAGVIWLYSIIFYLPLD) form a helical membrane-spanning segment. Over 839 to 952 (IMKFAIRYIL…IETIQQHYTV (114 aa)) the chain is Cytoplasmic.

This sequence belongs to the cation transport ATPase (P-type) (TC 3.A.3) family. Type IIIA subfamily. As to expression, expressed at high levels in root, stem, leaf and flower.

It localises to the cell membrane. The enzyme catalyses ATP + H2O + H(+)(in) = ADP + phosphate + 2 H(+)(out). Functionally, the plasma membrane ATPase of plants and fungi is a hydrogen ion pump. The proton gradient it generates drives the active transport of nutrients by H(+)-symport. The resulting external acidification and/or internal alkinization may mediate growth responses. The sequence is that of Plasma membrane ATPase 4 (PMA4) from Nicotiana plumbaginifolia (Leadwort-leaved tobacco).